We begin with the raw amino-acid sequence, 215 residues long: Large ribosomal subunit protein uL16 (215 aa).

Belongs to the universal ribosomal protein uL16 family. In terms of assembly, component of the small ribosomal subunit. Mature ribosomes consist of a small (40S) and a large (60S) subunit. The 40S subunit contains about 33 different proteins and 1 molecule of RNA (18S). The 60S subunit contains about 49 different proteins and 3 molecules of RNA (25S, 5.8S and 5S).

This is Large ribosomal subunit protein uL16 (RPL10) from Euglena gracilis.